The primary structure comprises 418 residues: Oxalate:formate antiporter (418 aa).

Transmembrane regions (helical) follow at residues W17–W37, L48–G68, I84–D104, A108–M128, L141–I161, A172–I192, F222–N242, L250–G270, M288–L308, V311–F331, F350–A370, and A378–P398. K355 contacts oxalate.

This sequence belongs to the major facilitator superfamily. OFA (TC 2.A.1.11) family. As to quaternary structure, monomer.

It localises to the cell inner membrane. Anion transporter that carries out the exchange of divalent oxalate with monovalent formate, the product of oxalate decarboxylation, at the plasma membrane, and in doing so catalyzes the vectorial portion of a proton-motive metabolic cycle that drives ATP synthesis. The polypeptide is Oxalate:formate antiporter (oxlT) (Oxalobacter formigenes).